A 143-amino-acid polypeptide reads, in one-letter code: Probable glycine cleavage system H protein (143 aa).

The 83-residue stretch at 36–118 (VATVGITDFA…YGEGWIFKIK (83 aa)) folds into the Lipoyl-binding domain. At Lys-77 the chain carries N6-lipoyllysine.

The protein belongs to the GcvH family. The glycine cleavage system is composed of four proteins: P, T, L and H. (R)-lipoate serves as cofactor.

Functionally, the glycine cleavage system catalyzes the degradation of glycine. The H protein shuttles the methylamine group of glycine from the P protein to the T protein. In Aeropyrum pernix (strain ATCC 700893 / DSM 11879 / JCM 9820 / NBRC 100138 / K1), this protein is Probable glycine cleavage system H protein.